A 538-amino-acid chain; its full sequence is Casein kinase I homolog 1 (538 aa).

The segment at 39-61 (SPARSSMTATTAANSNSNSSRDD) is disordered. Low complexity predominate over residues 41 to 57 (ARSSMTATTAANSNSNS). Positions 69 to 353 (YKIGKKIGEG…ETADGQYDWM (285 aa)) constitute a Protein kinase domain. ATP is bound by residues 75–83 (IGEGSFGVL) and lysine 98. Aspartate 188 functions as the Proton acceptor in the catalytic mechanism. Disordered stretches follow at residues 366-428 (NKKP…KPKL) and 474-527 (QQQL…LAAS). Low complexity-rich tracts occupy residues 391–410 (QLQMQQLQMQQLQQQQQQQQ) and 474–498 (QQQLRATGQPPSQPQAQTQSQQFGA). A phosphoserine mark is found at serine 522, serine 523, and serine 527. S-palmitoyl cysteine attachment occurs at residues cysteine 537 and cysteine 538.

The protein belongs to the protein kinase superfamily. CK1 Ser/Thr protein kinase family. Casein kinase I subfamily. Palmitoylated by AKR1.

The protein resides in the cell membrane. It localises to the mitochondrion membrane. It catalyses the reaction L-seryl-[protein] + ATP = O-phospho-L-seryl-[protein] + ADP + H(+). It carries out the reaction L-threonyl-[protein] + ATP = O-phospho-L-threonyl-[protein] + ADP + H(+). Functionally, casein kinases are operationally defined by their preferential utilization of acidic proteins such as caseins as substrates. This is Casein kinase I homolog 1 (YCK1) from Saccharomyces cerevisiae (strain ATCC 204508 / S288c) (Baker's yeast).